The following is a 339-amino-acid chain: Lipoate--protein ligase (339 aa).

The region spanning 31–221 is the BPL/LPL catalytic domain; that stretch reads FLDDDILFPY…QLLQIETISQ (191 aa). Residues R73, 78–81, K135, and A139 contribute to the ATP site; that span reads GAVY. A (R)-lipoate-binding site is contributed by K135.

The protein belongs to the LplA family.

It catalyses the reaction L-lysyl-[lipoyl-carrier protein] + (R)-lipoate + ATP = N(6)-[(R)-lipoyl]-L-lysyl-[lipoyl-carrier protein] + AMP + diphosphate + H(+). It functions in the pathway protein modification; protein lipoylation via exogenous pathway; protein N(6)-(lipoyl)lysine from lipoate: step 1/2. The protein operates within protein modification; protein lipoylation via exogenous pathway; protein N(6)-(lipoyl)lysine from lipoate: step 2/2. Its function is as follows. Catalyzes specifically the lipoylation of GcvH-L (SpyM50867), likely via the ATP-dependent activation of lipoate to lipoyl-AMP and the transfer of the activated lipoyl onto the lipoyl domain of the target protein. This is Lipoate--protein ligase from Streptococcus pyogenes serotype M5 (strain Manfredo).